We begin with the raw amino-acid sequence, 396 residues long: Elongation factor Tu (396 aa).

The tr-type G domain maps to 10–206; sequence KPHVNVGTIG…ALDTYIPTPE (197 aa). The G1 stretch occupies residues 19 to 26; sequence GHVDHGKT. 19 to 26 is a GTP binding site; the sequence is GHVDHGKT. Thr-26 is a Mg(2+) binding site. The tract at residues 60 to 64 is G2; the sequence is GITIN. Positions 81–84 are G3; it reads DCPG. Residues 81–85 and 136–139 each bind GTP; these read DCPGH and NKAD. Residues 136–139 form a G4 region; it reads NKAD. The G5 stretch occupies residues 174 to 176; the sequence is SAK.

The protein belongs to the TRAFAC class translation factor GTPase superfamily. Classic translation factor GTPase family. EF-Tu/EF-1A subfamily. As to quaternary structure, monomer.

Its subcellular location is the cytoplasm. It carries out the reaction GTP + H2O = GDP + phosphate + H(+). Its function is as follows. GTP hydrolase that promotes the GTP-dependent binding of aminoacyl-tRNA to the A-site of ribosomes during protein biosynthesis. In Bordetella avium (strain 197N), this protein is Elongation factor Tu.